A 382-amino-acid polypeptide reads, in one-letter code: Lycopene beta-cyclase (382 aa).

NAD(+) is bound at residue 6 to 36; it reads DLILVGAGLANGLIALRLQQQQPDMRILLID.

The protein belongs to the lycopene cyclase family. FAD is required as a cofactor.

It is found in the cell inner membrane. It carries out the reaction a carotenoid psi-end group = a carotenoid beta-end derivative. The catalysed reaction is all-trans-lycopene = gamma-carotene. The enzyme catalyses gamma-carotene = all-trans-beta-carotene. It catalyses the reaction all-trans-neurosporene = beta-zeacarotene. It carries out the reaction beta-zeacarotene = 7,8-dihydro-beta-carotene. Its pathway is carotenoid biosynthesis; beta-carotene biosynthesis. With respect to regulation, activity is increased in the presence of NAD(P)H. NADPH is not involved directly in the cyclization reaction, but must play an indirect role, e.g. as an allosteric activator. Its function is as follows. Catalyzes the double cyclization reaction which converts lycopene to beta-carotene. Also catalyzes the double cyclization reaction which converts neurosporene to 7,8-dihydro-beta-carotene via monocyclic beta-zeacarotene. May also convert zeta-carotene to bicyclic 7,8,7',8'-tetrahydro-beta-carotene. The protein is Lycopene beta-cyclase of Pantoea ananas (Erwinia uredovora).